A 380-amino-acid chain; its full sequence is O-phospho-L-seryl-tRNA:Cys-tRNA synthase (380 aa).

Residues Ala-86–Arg-87, Asn-192, and Ser-215–His-217 each bind pyridoxal 5'-phosphate. An N6-(pyridoxal phosphate)lysine modification is found at Lys-218.

Belongs to the SepCysS family. Homodimer. Interacts with SepRS. It depends on pyridoxal 5'-phosphate as a cofactor.

The catalysed reaction is O-phospho-L-seryl-tRNA(Cys) + hydrogen sulfide + H(+) = L-cysteinyl-tRNA(Cys) + phosphate. Functionally, converts O-phospho-L-seryl-tRNA(Cys) (Sep-tRNA(Cys)) to L-cysteinyl-tRNA(Cys) (Cys-tRNA(Cys)). The protein is O-phospho-L-seryl-tRNA:Cys-tRNA synthase of Methanococcus maripaludis (strain C6 / ATCC BAA-1332).